We begin with the raw amino-acid sequence, 282 residues long: Probable endonuclease 4 (282 aa).

Histidine 66, histidine 106, glutamate 143, aspartate 177, histidine 180, histidine 214, aspartate 227, histidine 229, and glutamate 259 together coordinate Zn(2+).

This sequence belongs to the AP endonuclease 2 family. The cofactor is Zn(2+).

The enzyme catalyses Endonucleolytic cleavage to 5'-phosphooligonucleotide end-products.. Endonuclease IV plays a role in DNA repair. It cleaves phosphodiester bonds at apurinic or apyrimidinic (AP) sites, generating a 3'-hydroxyl group and a 5'-terminal sugar phosphate. This chain is Probable endonuclease 4, found in Nitratidesulfovibrio vulgaris (strain DP4) (Desulfovibrio vulgaris).